A 441-amino-acid chain; its full sequence is MALTQLNSTCSKPQLHSSSQLSFLSRTRTRTLPRHYHSTFAPLHRTQHARISCSVAPNQVQVPAAQTQDPKGKPDCYGVFCLTYDLKAEEETKSWKKLINIAVSGAAGMISNHLLFKLASGEVFGPDQPIALKLLGSERSIQALEGVAMELEDSLFPLLREVVISIDPYEVFQDAEWALLIGAKPRGPGVERAALLDINGQIFAEQGKALNAVASRNAKVIVVGNPCNTNALICLKNAPNIPAKNFHALTRLDENRAKCQLALKAGVFYDKVSNMTIWGNHSTTQVPDFLNARIDGLPVKEVIKDNKWLEEEFTEKVQKRGGVLIQKWGRSSAASTSVSIVDAIRSLITPTPEGDWFSSGVYTNGNPYGIAEDIVFSMPCRSKGDGDYELVNDVIFDDYLRQKLAKTEAELLAEKKCVAHLTGEGIAVCDLPGDTMLPGEM.

The transit peptide at 1 to 58 (MALTQLNSTCSKPQLHSSSQLSFLSRTRTRTLPRHYHSTFAPLHRTQHARISCSVAPN) directs the protein to the chloroplast. A disulfide bridge connects residues Cys-76 and Cys-81. 105 to 111 (GAAGMIS) contacts NADP(+). Positions 186 and 192 each coordinate substrate. Asn-199 contacts NADP(+). An NAD(+)-binding site is contributed by Gln-206. Position 223–225 (223–225 (VGN)) interacts with NADP(+). The substrate site is built by Asn-225 and Arg-256. Residue His-281 is the Proton acceptor of the active site. Cys-417 and Cys-429 are oxidised to a cystine.

It belongs to the LDH/MDH superfamily. MDH type 2 family. As to quaternary structure, homodimer.

The protein localises to the plastid. The protein resides in the chloroplast. The catalysed reaction is (S)-malate + NADP(+) = oxaloacetate + NADPH + H(+). Chloroplast NADP-MDH is activated upon illumination. In order to be enzymatically active, disulfide bridges on the protein must be reduced by thioredoxin which receives electrons from ferredoxin and the electron transport system of photosynthesis. Functionally, the chloroplastic, NADP-dependent form is essential for the photosynthesis C4 cycle, which allows plants to circumvent the problem of photorespiration. In C4 plants, NADP-MDH activity acts to convert oxaloacetate to malate in chloroplasts of mesophyll cells for transport to the bundle sheath cells. The protein is Malate dehydrogenase [NADP], chloroplastic of Pisum sativum (Garden pea).